The following is a 302-amino-acid chain: Acetylglutamate kinase (302 aa).

Residues 67–68, arginine 89, and asparagine 194 each bind substrate; that span reads GG.

It belongs to the acetylglutamate kinase family. ArgB subfamily.

The protein localises to the cytoplasm. The enzyme catalyses N-acetyl-L-glutamate + ATP = N-acetyl-L-glutamyl 5-phosphate + ADP. The protein operates within amino-acid biosynthesis; L-arginine biosynthesis; N(2)-acetyl-L-ornithine from L-glutamate: step 2/4. Functionally, catalyzes the ATP-dependent phosphorylation of N-acetyl-L-glutamate. In Hahella chejuensis (strain KCTC 2396), this protein is Acetylglutamate kinase.